We begin with the raw amino-acid sequence, 476 residues long: ATP sulfurylase 2 (476 aa).

A chloroplast-targeting transit peptide spans methionine 1 to serine 56.

It belongs to the sulfate adenylyltransferase family. Homotetramer. As to expression, mostly expressed in leaves or cotyledons.

The protein localises to the plastid. It is found in the chloroplast. The protein resides in the cytoplasm. The enzyme catalyses sulfate + ATP + H(+) = adenosine 5'-phosphosulfate + diphosphate. It participates in sulfur metabolism; hydrogen sulfide biosynthesis; sulfite from sulfate: step 1/3. This chain is ATP sulfurylase 2 (APS2), found in Arabidopsis thaliana (Mouse-ear cress).